Reading from the N-terminus, the 89-residue chain is Small ribosomal subunit protein uS15 (89 aa).

Belongs to the universal ribosomal protein uS15 family. In terms of assembly, part of the 30S ribosomal subunit. Forms a bridge to the 50S subunit in the 70S ribosome, contacting the 23S rRNA.

Functionally, one of the primary rRNA binding proteins, it binds directly to 16S rRNA where it helps nucleate assembly of the platform of the 30S subunit by binding and bridging several RNA helices of the 16S rRNA. Forms an intersubunit bridge (bridge B4) with the 23S rRNA of the 50S subunit in the ribosome. The sequence is that of Small ribosomal subunit protein uS15 from Bartonella bacilliformis (strain ATCC 35685 / KC583 / Herrer 020/F12,63).